The chain runs to 152 residues: Prostaglandin E synthase (152 aa).

The Lumenal portion of the chain corresponds to 1 to 12 (MPAHSLAMSSPA). A helical membrane pass occupies residues 13-41 (LPAFLLCSTLLVIKMYVVAIITGQVRLRK). Residue R38 coordinates glutathione. Over 42-60 (KAFANPEDALRHGGPQYCR) the chain is Cytoplasmic. A helical transmembrane segment spans residues 61–90 (SDPDVERCLRAHRNDMETIYPFLFLGFVYS). 73-77 (RNDME) is a glutathione binding site. Residues 91-95 (FLGPN) lie on the Lumenal side of the membrane. Residues 96–119 (PFVAWMHFLVFLLGRVVHTVAYLG) traverse the membrane as a helical segment. 2 residues coordinate glutathione: H113 and Y117. At 120–123 (KLRA) the chain is on the cytoplasmic side. Residues 124 to 152 (PIRSVTYTLAQLPCASMALQILWEAARHL) form a helical membrane-spanning segment. Glutathione is bound at residue 126 to 130 (RSVTY).

It belongs to the MAPEG family. In terms of assembly, homotrimer. Glutathione serves as cofactor.

Its subcellular location is the membrane. It localises to the cytoplasm. It is found in the perinuclear region. It carries out the reaction prostaglandin H2 = prostaglandin E2. It catalyses the reaction 2-glyceryl-prostaglandin H2 = 2-glyceryl-prostaglandin E2. The catalysed reaction is prostaglandin G2 = (15S)-15-hydroperoxy-prostaglandin E2. The enzyme catalyses 1-chloro-2,4-dinitrobenzene + glutathione = 2,4-dinitrophenyl-S-glutathione + chloride + H(+). It carries out the reaction (5S)-hydroperoxy-(6E,8Z,11Z,14Z)-eicosatetraenoate + 2 glutathione = (5S)-hydroxy-(6E,8Z,11Z,14Z)-eicosatetraenoate + glutathione disulfide + H2O. It functions in the pathway lipid metabolism; prostaglandin biosynthesis. In terms of biological role, terminal enzyme of the cyclooxygenase (COX)-2-mediated prostaglandin E2 (PGE2) biosynthetic pathway. Catalyzes the glutathione-dependent oxidoreduction of prostaglandin endoperoxide H2 (PGH2) to prostaglandin E2 (PGE2) in response to inflammatory stimuli. Plays a key role in inflammation response, fever and pain. Also catalyzes the oxidoreduction of endocannabinoids into prostaglandin glycerol esters and PGG2 into 15-hydroperoxy-PGE2. In addition, displays low glutathione transferase and glutathione-dependent peroxidase activities, toward 1-chloro-2,4-dinitrobenzene and 5-hydroperoxyicosatetraenoic acid (5-HPETE), respectively. This chain is Prostaglandin E synthase (PTGES), found in Macaca fascicularis (Crab-eating macaque).